The chain runs to 335 residues: Glycerol-3-phosphate dehydrogenase [NAD(P)+] (335 aa).

NADPH is bound by residues Ser15, Tyr16, His36, and Lys110. Residues Lys110, Gly139, and Thr141 each contribute to the sn-glycerol 3-phosphate site. NADPH is bound at residue Ala143. Positions 195, 248, 258, 259, and 260 each coordinate sn-glycerol 3-phosphate. Residue Lys195 is the Proton acceptor of the active site. Arg259 contacts NADPH. NADPH is bound by residues Val283 and Glu285.

The protein belongs to the NAD-dependent glycerol-3-phosphate dehydrogenase family.

It localises to the cytoplasm. The enzyme catalyses sn-glycerol 3-phosphate + NAD(+) = dihydroxyacetone phosphate + NADH + H(+). The catalysed reaction is sn-glycerol 3-phosphate + NADP(+) = dihydroxyacetone phosphate + NADPH + H(+). Its pathway is membrane lipid metabolism; glycerophospholipid metabolism. Functionally, catalyzes the reduction of the glycolytic intermediate dihydroxyacetone phosphate (DHAP) to sn-glycerol 3-phosphate (G3P), the key precursor for phospholipid synthesis. The sequence is that of Glycerol-3-phosphate dehydrogenase [NAD(P)+] from Haemophilus influenzae (strain 86-028NP).